A 421-amino-acid polypeptide reads, in one-letter code: Subtilisin-like protease 2 (421 aa).

A signal peptide spans 1–16; sequence MQLLNFGLLLLPFVAG. The propeptide occupies 17–122; it reads DLAPQPEPLL…VHPDQHVYLA (106 aa). The Inhibitor I9 domain occupies 36–122; it reads QYIVTLKEGL…VHPDQHVYLA (87 aa). The 291-residue stretch at 131–421 folds into the Peptidase S8 domain; sequence RWGLGYMSSK…ERKFTLPKYF (291 aa). Residues aspartate 169 and histidine 201 each act as charge relay system in the active site. N-linked (GlcNAc...) asparagine glycosylation is found at asparagine 248, asparagine 261, and asparagine 348. Catalysis depends on serine 357, which acts as the Charge relay system. The N-linked (GlcNAc...) asparagine glycan is linked to asparagine 388.

This sequence belongs to the peptidase S8 family.

It localises to the secreted. In terms of biological role, secreted subtilisin-like serine protease with keratinolytic activity that contributes to pathogenicity. The sequence is that of Subtilisin-like protease 2 (SUB2) from Trichophyton equinum (Horse ringworm fungus).